The following is a 289-amino-acid chain: Nucleotide-binding protein FRAAL4592 (289 aa).

13 to 20 (GLSGAGRS) provides a ligand contact to ATP. Residue 64–67 (DVRG) coordinates GTP.

The protein belongs to the RapZ-like family.

Functionally, displays ATPase and GTPase activities. The polypeptide is Nucleotide-binding protein FRAAL4592 (Frankia alni (strain DSM 45986 / CECT 9034 / ACN14a)).